The following is a 1653-amino-acid chain: Protein TOPAZ1 (1653 aa).

Disordered regions lie at residues 1-94 (MRPP…TDLV), 284-303 (YSVE…KSGK), and 415-442 (ISST…SETE). The segment covering 63–78 (GREETEGDKLAKENGK) has biased composition (basic and acidic residues). A compositionally biased stretch (basic and acidic residues) spans 423-442 (SDGHHMEKRSPRGDLRSETE).

Restricted to testis, where it localizes to germ cells.

It is found in the cytoplasm. It localises to the cytosol. Functionally, important for normal spermatogenesis and male fertility. Specifically required for progression to the post-meiotic stages of spermatocyte development. Seems to be necessary for normal expression levels of a number of testis-expressed gene transcripts, although its role in this process is unclear. The polypeptide is Protein TOPAZ1 (Mus musculus (Mouse)).